A 129-amino-acid polypeptide reads, in one-letter code: Small ribosomal subunit protein uS11 (129 aa).

Belongs to the universal ribosomal protein uS11 family. Part of the 30S ribosomal subunit. Interacts with proteins S7 and S18. Binds to IF-3.

Its function is as follows. Located on the platform of the 30S subunit, it bridges several disparate RNA helices of the 16S rRNA. Forms part of the Shine-Dalgarno cleft in the 70S ribosome. This chain is Small ribosomal subunit protein uS11, found in Pseudomonas entomophila (strain L48).